Here is a 390-residue protein sequence, read N- to C-terminus: Period circadian protein (390 aa).

Disordered regions lie at residues 27 to 120, 164 to 188, 247 to 266, and 327 to 356; these read VTAP…APPV, LEYS…WEGE, GGNG…STNQ, and SPSG…TSQA. Positions 93–114 are enriched in gly residues; sequence GTSGTGNSGDGGGGGGADGTGS. Positions 247 to 256 are enriched in gly residues; it reads GGNGNVGSGN.

As to quaternary structure, forms a heterodimer with timeless (TIM); the complex then translocates into the nucleus. Post-translationally, phosphorylated with a circadian rhythmicity, probably by the double-time protein (dbt). Phosphorylation could be implicated in the stability of per monomer and in the formation of heterodimer per-tim.

The protein resides in the nucleus. It is found in the cytoplasm. Its subcellular location is the perinuclear region. Essential for biological clock functions. Determines the period length of circadian and ultradian rhythms; an increase in PER dosage leads to shortened circadian rhythms and a decrease leads to lengthened circadian rhythms. Essential for the circadian rhythmicity of locomotor activity, eclosion behavior, and for the rhythmic component of the male courtship song that originates in the thoracic nervous system. The biological cycle depends on the rhythmic formation and nuclear localization of the TIM-PER complex. Light induces the degradation of TIM, which promotes elimination of PER. Nuclear activity of the heterodimer coordinatively regulates PER and TIM transcription through a negative feedback loop. Behaves as a negative element in circadian transcriptional loop. Does not appear to bind DNA, suggesting indirect transcriptional inhibition. The chain is Period circadian protein (per) from Drosophila tropicalis (Fruit fly).